Here is a 129-residue protein sequence, read N- to C-terminus: Mediator of RNA polymerase II transcription subunit 31-B (129 aa).

It belongs to the Mediator complex subunit 31 family. In terms of assembly, component of the Mediator complex.

The protein localises to the nucleus. Functionally, component of the Mediator complex, a coactivator involved in the regulated transcription of nearly all RNA polymerase II-dependent genes. Mediator functions as a bridge to convey information from gene-specific regulatory proteins to the basal RNA polymerase II transcription machinery. Mediator is recruited to promoters by direct interactions with regulatory proteins and serves as a scaffold for the assembly of a functional preinitiation complex with RNA polymerase II and the general transcription factors. The sequence is that of Mediator of RNA polymerase II transcription subunit 31-B (med31-b) from Xenopus laevis (African clawed frog).